The sequence spans 648 residues: Serine/threonine-protein kinase DCLK3 (648 aa).

2 disordered regions span residues Asp86–Val127 and Gln150–Met345. Composition is skewed to basic and acidic residues over residues Gly98 to Val127, Glu213 to Ser234, Glu255 to Pro266, Leu277 to Pro303, and Thr312 to Ser338. Residues Tyr356 to Ile613 enclose the Protein kinase domain. Residues Ile362–Val370 and Lys385 contribute to the ATP site. Asp477 functions as the Proton acceptor in the catalytic mechanism. Positions Val628–Ser648 are disordered.

The protein belongs to the protein kinase superfamily. CAMK Ser/Thr protein kinase family. CaMK subfamily.

It localises to the cytoplasm. The protein localises to the nucleus. The enzyme catalyses L-seryl-[protein] + ATP = O-phospho-L-seryl-[protein] + ADP + H(+). It carries out the reaction L-threonyl-[protein] + ATP = O-phospho-L-threonyl-[protein] + ADP + H(+). In Homo sapiens (Human), this protein is Serine/threonine-protein kinase DCLK3 (DCLK3).